Reading from the N-terminus, the 99-residue chain is DNA-directed RNA polymerase subunit omega (99 aa).

Belongs to the RNA polymerase subunit omega family. In terms of assembly, the RNAP catalytic core consists of 2 alpha, 1 beta, 1 beta' and 1 omega subunit. When a sigma factor is associated with the core the holoenzyme is formed, which can initiate transcription.

It catalyses the reaction RNA(n) + a ribonucleoside 5'-triphosphate = RNA(n+1) + diphosphate. In terms of biological role, promotes RNA polymerase assembly. Latches the N- and C-terminal regions of the beta' subunit thereby facilitating its interaction with the beta and alpha subunits. The sequence is that of DNA-directed RNA polymerase subunit omega from Xanthomonas oryzae pv. oryzae (strain MAFF 311018).